A 515-amino-acid polypeptide reads, in one-letter code: Fatty acyl-CoA reductase 1 (515 aa).

Residues 1–465 lie on the Cytoplasmic side of the membrane; it reads MVSIPEYYEG…ARKHLNKLRN (465 aa). The chain crosses the membrane as a helical span at residues 466-483; that stretch reads IRYGFNTILVILIWRIFI. Residues 484–515 are Peroxisomal-facing; the sequence is ARSQMARNIWYFVVSLCYKFLSYFRASSTMRY.

It belongs to the fatty acyl-CoA reductase family.

The protein localises to the peroxisome membrane. The enzyme catalyses a long-chain fatty acyl-CoA + 2 NADPH + 2 H(+) = a long-chain primary fatty alcohol + 2 NADP(+) + CoA. The catalysed reaction is hexadecanoyl-CoA + 2 NADPH + 2 H(+) = hexadecan-1-ol + 2 NADP(+) + CoA. It catalyses the reaction octadecanoyl-CoA + 2 NADPH + 2 H(+) = octadecan-1-ol + 2 NADP(+) + CoA. It carries out the reaction (9Z)-octadecenoyl-CoA + 2 NADPH + 2 H(+) = (9Z)-octadecen-1-ol + 2 NADP(+) + CoA. The enzyme catalyses (9Z,12Z)-octadecadienoyl-CoA + 2 NADPH + 2 H(+) = (9Z,12Z)-octadecadien-1-ol + 2 NADP(+) + CoA. The catalysed reaction is eicosanoyl-CoA + 2 NADPH + 2 H(+) = eicosan-1-ol + 2 NADP(+) + CoA. It catalyses the reaction 16-methylheptadecanoyl-CoA + 2 NADPH + 2 H(+) = 16-methylheptadecan-1-ol + 2 NADP(+) + CoA. It carries out the reaction 18-methylnonadecanoyl-CoA + 2 NADPH + 2 H(+) = 18-methylnonadecan-1-ol + 2 NADP(+) + CoA. Its function is as follows. Catalyzes the reduction of saturated and unsaturated C16 or C18 fatty acyl-CoA to fatty alcohols. It plays an essential role in the production of ether lipids/plasmalogens which synthesis requires fatty alcohols. In parallel, it is also required for wax monoesters production since fatty alcohols also constitute a substrate for their synthesis. In Gallus gallus (Chicken), this protein is Fatty acyl-CoA reductase 1.